A 620-amino-acid chain; its full sequence is bZIP transcription factor 49 (620 aa).

At 1-287 (MAEPVLEDTY…VAKVKKFKKV (287 aa)) the chain is on the cytoplasmic side. The span at 109-135 (SSCYNRESPTDSDFSGTSQSLSFSGQD) shows a compositional bias: polar residues. The interval 109 to 155 (SSCYNRESPTDSDFSGTSQSLSFSGQDSAKRKTEIEEDSSDESRRLG) is disordered. The region spanning 172-235 (EKKKNVRLVR…VTLRQQMGTR (64 aa)) is the bZIP domain. The basic motif stretch occupies residues 173–205 (KKKNVRLVRNRESAHLSRQRKKHYVEELEDKVK). The interval 211-218 (ISELSSKM) is leucine-zipper. A helical membrane pass occupies residues 288–308 (ASFSVFGFLFCMFLFGALVNI). Residues 309-620 (SYGEYKSNYV…RPDVPHLMTS (312 aa)) lie on the Lumenal side of the membrane. Disordered regions lie at residues 343 to 364 (DSDQ…PRNS), 398 to 460 (ARDS…SNDQ), and 505 to 557 (PASP…RETK). Residues Asn351 and Asn363 are each glycosylated (N-linked (GlcNAc...) asparagine). Residues 352–364 (VSETENLGPPRNS) are compositionally biased toward polar residues. 2 stretches are compositionally biased toward basic and acidic residues: residues 398–409 (ARDSETKNEEGK) and 432–441 (RTRDVSKHLY). Polar residues-rich tracts occupy residues 447-460 (GLSS…SNDQ) and 508-519 (PHTQQCKNTSDT). N-linked (GlcNAc...) asparagine glycosylation occurs at Asn515. The short motif at 526–529 (RRIL) is the RRIL cleavage motif element. N-linked (GlcNAc...) asparagine glycans are attached at residues Asn539 and Asn546. Basic and acidic residues predominate over residues 540–557 (LTKEDHNSSSKDKFRETK).

Belongs to the bZIP family. In terms of assembly, interacts with BZIP28.

It is found in the endoplasmic reticulum membrane. Its subcellular location is the nucleus. Its function is as follows. Transcriptional activator involved in stress responses. This chain is bZIP transcription factor 49, found in Arabidopsis thaliana (Mouse-ear cress).